The sequence spans 572 residues: Methionine--tRNA ligase (572 aa).

Residues 11–21 (PYVNHVPHLGT) carry the 'HIGH' region motif. Positions 143, 146, 156, and 159 each coordinate Zn(2+). Positions 334–338 (QFSKS) match the 'KMSKS' region motif. Lys-337 provides a ligand contact to ATP.

It belongs to the class-I aminoacyl-tRNA synthetase family. MetG type 1 subfamily. Requires Zn(2+) as cofactor.

The protein localises to the cytoplasm. The enzyme catalyses tRNA(Met) + L-methionine + ATP = L-methionyl-tRNA(Met) + AMP + diphosphate. In terms of biological role, is required not only for elongation of protein synthesis but also for the initiation of all mRNA translation through initiator tRNA(fMet) aminoacylation. The protein is Methionine--tRNA ligase (metG) of Aeropyrum pernix (strain ATCC 700893 / DSM 11879 / JCM 9820 / NBRC 100138 / K1).